The primary structure comprises 656 residues: uncharacterized protein (656 aa).

Positions 623-656 (EIDIPGTPASIDPEWSRPPGSITDDHVFDAPLHR) are disordered. The segment covering 645-656 (TDDHVFDAPLHR) has biased composition (basic and acidic residues).

This is an uncharacterized protein from Mycobacterium tuberculosis (strain ATCC 25618 / H37Rv).